The primary structure comprises 132 residues: C-X-C motif chemokine 5 (132 aa).

An N-terminal signal peptide occupies residues 1–40 (MSLQLRSSARIPSGSISPFMRMAPLAFLLLFTLPQHLAEA). 2 disulfides stabilise this stretch: Cys53/Cys79 and Cys55/Cys95.

The protein belongs to the intercrine alpha (chemokine CxC) family. As to quaternary structure, monomer. Homodimer. GCP-2(1-78) and GCP-2(9-78) are produced by proteolytic cleavage after secretion from fibroblasts and epithelial cells. GCP-2(9-78) is the most prominent form. A number of additional N-terminal (processed between pos. 41 and 48) and C-terminal (processed between pos. 118 and 132) processed forms have been identified, probably also representing intermediate states.

The protein localises to the secreted. In terms of biological role, may participate in the recruitment of inflammatory cells by injured or infected tissue. GCP-2(1-78) and, more potent, GCP-2(9-78) attract neutrophils and are involved in neutrophil activation. This chain is C-X-C motif chemokine 5 (Cxcl5), found in Mus musculus (Mouse).